A 182-amino-acid polypeptide reads, in one-letter code: UPF0397 protein YdcD (182 aa).

5 consecutive transmembrane segments (helical) span residues 8–28, 42–62, 74–94, 114–134, and 146–166; these read IVVA…LINI, AVLA…IGFI, APWW…AFGV, IVQF…GDVL, and QGIV…TLLL.

Belongs to the UPF0397 family.

Its subcellular location is the cell membrane. This Lactococcus lactis subsp. lactis (strain IL1403) (Streptococcus lactis) protein is UPF0397 protein YdcD (ydcD).